Reading from the N-terminus, the 426-residue chain is Glutamate-1-semialdehyde 2,1-aminomutase (426 aa).

Lysine 265 is subject to N6-(pyridoxal phosphate)lysine.

It belongs to the class-III pyridoxal-phosphate-dependent aminotransferase family. HemL subfamily. Homodimer. Pyridoxal 5'-phosphate serves as cofactor.

The protein localises to the cytoplasm. It catalyses the reaction (S)-4-amino-5-oxopentanoate = 5-aminolevulinate. It participates in porphyrin-containing compound metabolism; protoporphyrin-IX biosynthesis; 5-aminolevulinate from L-glutamyl-tRNA(Glu): step 2/2. This chain is Glutamate-1-semialdehyde 2,1-aminomutase, found in Cronobacter sakazakii (strain ATCC BAA-894) (Enterobacter sakazakii).